A 284-amino-acid chain; its full sequence is RNA polymerase sigma factor RpoH (284 aa).

A sigma-70 factor domain-2 region spans residues 53 to 122; it reads LILSHLRFVI…IHEYVLRNWR (70 aa). Positions 77-80 match the Interaction with polymerase core subunit RpoC motif; it reads DLIQ. The segment at 228–280 is sigma-70 factor domain-4; sequence ALLRLDERSRHIIHARWLDKNKKNTLQNIANNYGISAERVRQLEKNAMKKLKL. The H-T-H motif DNA-binding region spans 253–272; the sequence is LQNIANNYGISAERVRQLEK.

It belongs to the sigma-70 factor family. RpoH subfamily. As to quaternary structure, interacts with the RNA polymerase core enzyme.

It is found in the cytoplasm. Its function is as follows. Sigma factors are initiation factors that promote the attachment of RNA polymerase to specific initiation sites and are then released. This sigma factor is involved in regulation of expression of heat shock genes. The sequence is that of RNA polymerase sigma factor RpoH from Buchnera aphidicola subsp. Acyrthosiphon pisum (strain APS) (Acyrthosiphon pisum symbiotic bacterium).